The sequence spans 336 residues: MKLSELLSAYSIETEFSNDFEVHALAELDKATPNDISYIDQVCYLKLLKDSKAGAVFIRKKESSKVPKSMQALIVDNPHLAFAKVSHAFKIPFFKNPQSVNEPKHFEKVTIMPNVVIGEGVEIGENSLIYPGVVIADGVKIGKNCILYPRVILYQNTILEDNVIIHAGSVIGGDGFGYAHTALGEHVKIEHVGIVRIQKNVEIGANTAIDRAVFGETLIKEGVKIDNLVQIGHNCVLGEHSIVVSQVGLSGSTTTGRNVVFGGQVGIGGHLHVGEFTQIGGKSAVGKDLPPNTNFAGAIPAMEIHEWHHFLAHLRTNFRKQQKTSLLQKAKGFFKS.

The Proton acceptor role is filled by histidine 233.

It belongs to the transferase hexapeptide repeat family. LpxD subfamily. In terms of assembly, homotrimer.

The catalysed reaction is a UDP-3-O-[(3R)-3-hydroxyacyl]-alpha-D-glucosamine + a (3R)-hydroxyacyl-[ACP] = a UDP-2-N,3-O-bis[(3R)-3-hydroxyacyl]-alpha-D-glucosamine + holo-[ACP] + H(+). It participates in bacterial outer membrane biogenesis; LPS lipid A biosynthesis. In terms of biological role, catalyzes the N-acylation of UDP-3-O-acylglucosamine using 3-hydroxyacyl-ACP as the acyl donor. Is involved in the biosynthesis of lipid A, a phosphorylated glycolipid that anchors the lipopolysaccharide to the outer membrane of the cell. This is UDP-3-O-acylglucosamine N-acyltransferase from Helicobacter pylori (strain J99 / ATCC 700824) (Campylobacter pylori J99).